A 432-amino-acid polypeptide reads, in one-letter code: Selenocysteine lyase (432 aa).

M1 carries the post-translational modification N-acetylmethionine. The disordered stretch occupies residues 1-20 (MDVARNGARGSVESPPNRKV). At S117 the chain carries Phosphoserine. K247 is modified (N6-(pyridoxal phosphate)lysine). The active-site S-selanylcysteine intermediate is C375.

It belongs to the class-V pyridoxal-phosphate-dependent aminotransferase family. In terms of assembly, homodimer. It depends on pyridoxal 5'-phosphate as a cofactor.

The protein resides in the cytoplasm. Its subcellular location is the cytosol. It carries out the reaction L-selenocysteine + AH2 = hydrogenselenide + L-alanine + A + H(+). Functionally, catalyzes the decomposition of L-selenocysteine to L-alanine and elemental selenium. This is Selenocysteine lyase (Scly) from Rattus norvegicus (Rat).